A 511-amino-acid polypeptide reads, in one-letter code: MARMGISKGGSGKEAKKPPLLLGRFEVGKLLGQGNFAKVYHARNVATGEEVAIKVMEKEKIFKSGLTAHIKREIAVLRRVRHPHIVQLYEVMATKLRIYFVMEYVRGGELFARVARGRLPEADARRYFQQLVSAVAFCHARGVFHRDIKPENLLVDDAGDLKVSDFGLSAVADGMRRDGLFHTFCGTPAYVAPEVLSRRGYDAAGADLWSCGVVLFVLMAGYLPFQDRNLAGMYRKIHKGDFRCPKWFSPELIRLLRGVLVTNPQRRATAEGIMENEWFKIGFRRFSFRVEDDRTFTCFELDDDAAVDAPTSPPDTPRTVDSGDVGAAPTRPRKAGSLTSCDSAPSLLEGRFGLGGSSRRRSSLNAFDIISFSPGFDLSGLFDQDDGGGAGAGSIPEQQKHTARFVSAAPVEVIVATLEAAAAAAGMAVREREDGSISMEGTREGEHGALAVAAEIYELTPELVVVEVRRKAGGAAEYEEFFRARLKPSLRELVCDDRPCPEDSGELSRSL.

In terms of domain architecture, Protein kinase spans 25–279 (FEVGKLLGQG…AEGIMENEWF (255 aa)). Residues 31 to 39 (LGQGNFAKV) and Lys54 contribute to the ATP site. Residue Asp147 is the Proton acceptor of the active site. The segment at 165–194 (DFGLSAVADGMRRDGLFHTFCGTPAYVAPE) is activation loop. The disordered stretch occupies residues 307 to 340 (VDAPTSPPDTPRTVDSGDVGAAPTRPRKAGSLTS). In terms of domain architecture, NAF spans 321-383 (DSGDVGAAPT…PGFDLSGLFD (63 aa)). The tract at residues 400–429 (KHTARFVSAAPVEVIVATLEAAAAAAGMAV) is PPI.

This sequence belongs to the protein kinase superfamily. CAMK Ser/Thr protein kinase family. SNF1 subfamily. Requires Mn(2+) as cofactor.

It carries out the reaction L-seryl-[protein] + ATP = O-phospho-L-seryl-[protein] + ADP + H(+). The catalysed reaction is L-threonyl-[protein] + ATP = O-phospho-L-threonyl-[protein] + ADP + H(+). Functionally, CIPK serine-threonine protein kinases interact with CBL proteins. Binding of a CBL protein to the regulatory NAF domain of CIPK protein lead to the activation of the kinase in a calcium-dependent manner. The protein is Putative CBL-interacting protein kinase 13 (CIPK13) of Oryza sativa subsp. japonica (Rice).